Here is a 346-residue protein sequence, read N- to C-terminus: Growth hormone-inducible transmembrane protein (346 aa).

The N-terminal 45 residues, Met-1–Glu-45, are a transit peptide targeting the mitochondrion. Over Tyr-46–Arg-83 the chain is Mitochondrial matrix. The chain crosses the membrane as a helical span at residues Trp-84–Met-104. The Mitochondrial intermembrane portion of the chain corresponds to Ser-105–His-126. The chain crosses the membrane as a helical span at residues Ser-127–Ala-147. Over Arg-148–Ser-160 the chain is Mitochondrial matrix. Residues Trp-161–Ile-181 form a helical membrane-spanning segment. Residues Ser-182–His-191 lie on the Mitochondrial intermembrane side of the membrane. A helical membrane pass occupies residues Leu-192–Gly-212. Over Gly-213–Pro-214 the chain is Mitochondrial matrix. The helical transmembrane segment at Leu-215–Met-235 threads the bilayer. At Cys-236–Met-245 the chain is on the mitochondrial intermembrane side. Residues Gly-246–Leu-266 form a helical membrane-spanning segment. Residues Pro-267 to Ala-272 lie on the Mitochondrial matrix side of the membrane. Residues Gly-273–Leu-293 form a helical membrane-spanning segment. Residues Tyr-294 to Lys-346 are Mitochondrial intermembrane-facing.

Belongs to the BI1 family. As to quaternary structure, interacts with LETM1 and AFG3L2. Undergoes AFG3L2-mediated proteolytic degradation, upon hyperpolarization of mitochondria.

It localises to the mitochondrion inner membrane. The catalysed reaction is Ca(2+)(in) + 2 H(+)(out) = Ca(2+)(out) + 2 H(+)(in). It catalyses the reaction K(+)(in) + H(+)(out) = K(+)(out) + H(+)(in). Plays an important role in maintenance of mitochondrial morphology and in mediating either calcium or potassium/proton antiport. Mediates proton-dependent calcium efflux from mitochondrion. Also functions as an electroneutral mitochondrial proton/potassium exchanger. Required for the mitochondrial tubular network and cristae organization. Involved in apoptotic release of cytochrome c. Inhibits AFG3L2 proteolytic activity, stimulating respiration and stabilizing respiratory enzymes in actively respiring mitochondria. However, when mitochondria become hyperpolarized, GHITM loses its inhibitory activity toward AFG3L2 and the now active AFG3L2 turns first on GHITM and, if hyperpolarization persists, on other proteins of the mitochondria, leading to a broad remodeling of the mitochondrial proteome. In Mus musculus (Mouse), this protein is Growth hormone-inducible transmembrane protein (Ghitm).